A 332-amino-acid chain; its full sequence is Thiosulfate-binding protein (332 aa).

Positions 1–22 (MKRLFSASLLAAGLALGGAAHA) are cleaved as a signal peptide.

The protein belongs to the prokaryotic sulfate-binding protein family.

The protein resides in the periplasm. In terms of biological role, binds thiosulfate specifically and with high affinity. Has no detectable affinity for sulfate. This chain is Thiosulfate-binding protein, found in Pseudomonas aeruginosa (strain ATCC 15692 / DSM 22644 / CIP 104116 / JCM 14847 / LMG 12228 / 1C / PRS 101 / PAO1).